The primary structure comprises 72 residues: uncharacterized protein (72 aa).

The segment covering 1–38 (MSIFSSLSSLSTGSLKSSVSSIENGSSSGSFGSNETSG) has biased composition (low complexity). Residues 1–42 (MSIFSSLSSLSTGSLKSSVSSIENGSSSGSFGSNETSGWGQH) form a disordered region.

This is an uncharacterized protein from Dictyostelium discoideum (Social amoeba).